The chain runs to 317 residues: L-lactate dehydrogenase (317 aa).

NAD(+) is bound by residues valine 17, aspartate 38, lysine 43, and 82 to 83; that span reads GA. Substrate contacts are provided by residues glutamine 85, arginine 91, and 123–126; that span reads NPVD. Residues 121 to 123 and serine 146 contribute to the NAD(+) site; that span reads VAN. 151-154 contacts substrate; that stretch reads DSAR. 2 residues coordinate beta-D-fructose 1,6-bisphosphate: arginine 156 and histidine 171. The active-site Proton acceptor is the histidine 178. A Phosphotyrosine modification is found at tyrosine 224. Threonine 233 contacts substrate.

This sequence belongs to the LDH/MDH superfamily. LDH family. As to quaternary structure, homotetramer.

Its subcellular location is the cytoplasm. It catalyses the reaction (S)-lactate + NAD(+) = pyruvate + NADH + H(+). The protein operates within fermentation; pyruvate fermentation to lactate; (S)-lactate from pyruvate: step 1/1. With respect to regulation, allosterically activated by fructose 1,6-bisphosphate (FBP). Its function is as follows. Catalyzes the conversion of lactate to pyruvate. The chain is L-lactate dehydrogenase from Moorella thermoacetica (strain ATCC 39073 / JCM 9320).